Here is a 117-residue protein sequence, read N- to C-terminus: NADH-ubiquinone oxidoreductase chain 3 (117 aa).

The next 3 helical transmembrane spans lie at 1-21 (MLML…VMML), 57-77 (FFLI…LLPM), and 86-106 (LMNW…GLYH).

It belongs to the complex I subunit 3 family.

The protein resides in the mitochondrion membrane. It carries out the reaction a ubiquinone + NADH + 5 H(+)(in) = a ubiquinol + NAD(+) + 4 H(+)(out). Its function is as follows. Core subunit of the mitochondrial membrane respiratory chain NADH dehydrogenase (Complex I) that is believed to belong to the minimal assembly required for catalysis. Complex I functions in the transfer of electrons from NADH to the respiratory chain. The immediate electron acceptor for the enzyme is believed to be ubiquinone. This chain is NADH-ubiquinone oxidoreductase chain 3 (ND3), found in Anopheles quadrimaculatus (Common malaria mosquito).